Reading from the N-terminus, the 181-residue chain is Crustacyanin-A1 subunit (181 aa).

Cystine bridges form between Cys-12-Cys-121, Cys-51-Cys-173, and Cys-117-Cys-150.

Belongs to the calycin superfamily. Lipocalin family. Oligomer; Can form dimers (beta-crustacyanin); or complexes of 16 subunits (alpha-crustacyanin). There are five types of subunits: A1, A2, A3, C1 and C2. Found in the carapace.

Its subcellular location is the secreted. The protein resides in the extracellular space. In terms of biological role, binds the carotenoid astaxanthin (AXT) which provides the blue coloration to the carapace of the lobster. This Homarus gammarus (European lobster) protein is Crustacyanin-A1 subunit.